We begin with the raw amino-acid sequence, 387 residues long: 3-ketoacyl-CoA thiolase (387 aa).

Residue Cys91 is the Acyl-thioester intermediate of the active site. Active-site proton acceptor residues include His343 and Cys373.

The protein belongs to the thiolase-like superfamily. Thiolase family. Heterotetramer of two alpha chains (FadB) and two beta chains (FadA).

The protein localises to the cytoplasm. It catalyses the reaction an acyl-CoA + acetyl-CoA = a 3-oxoacyl-CoA + CoA. Its pathway is lipid metabolism; fatty acid beta-oxidation. Catalyzes the final step of fatty acid oxidation in which acetyl-CoA is released and the CoA ester of a fatty acid two carbons shorter is formed. This chain is 3-ketoacyl-CoA thiolase, found in Shigella boydii serotype 4 (strain Sb227).